The sequence spans 294 residues: Probable metallo-hydrolase BURPS1710b_2304 (294 aa).

Residues histidine 68, histidine 70, aspartate 72, histidine 73, histidine 143, aspartate 170, and histidine 212 each contribute to the a divalent metal cation site.

This sequence belongs to the metallo-beta-lactamase superfamily. Requires a divalent metal cation as cofactor.

Its function is as follows. Probable hydrolase. Does not have beta-lactamase activity. The protein is Probable metallo-hydrolase BURPS1710b_2304 of Burkholderia pseudomallei (strain 1710b).